The sequence spans 804 residues: Mechanosensitive cation channel TMEM63A (804 aa).

Residues 1 to 51 lie on the Extracellular side of the membrane; it reads MTSSPFLDPWPSKAVFVRERLGLGERPNDSYCYNSAKNSTVLQGVTFGGIP. Asparagine 38 is a glycosylation site (N-linked (GlcNAc...) asparagine). The helical transmembrane segment at 52–74 threads the bilayer; that stretch reads TVLLLDVSCFLFLILVFSIIRRR. Residues 75–133 are Cytoplasmic-facing; that stretch reads FWDYGRIALVSEAGSEARFQRLSSSSSGQQDFENELGCCPWLTAIFRLHDDQILEWCGE. The chain crosses the membrane as a helical span at residues 134-166; that stretch reads DAIHYLSFQRHIIFLLVVISFLSLCVILPVNLS. At 167–190 the chain is on the extracellular side; it reads GDLLGKDPYSFGRTTIANLQTDND. The helical transmembrane segment at 191–216 threads the bilayer; that stretch reads LLWLHTVFSVIYLFLTVGFMWHHTRS. Residues 217-415 lie on the Cytoplasmic side of the membrane; that stretch reads IRYKEESLVR…CWKNLSIQGV (199 aa). The tract at residues 218–413 is intracellular linker IL2; confers mechanosensitivity; sequence RYKEESLVRQ…DICWKNLSIQ (196 aa). A helical transmembrane segment spans residues 416–443; it reads RWWLQWLGINFSLFVVLFFLTTPSIIMS. At 444–461 the chain is on the extracellular side; it reads TMDKFNVTKPIHALNNPV. An N-linked (GlcNAc...) asparagine glycan is attached at asparagine 449. A helical membrane pass occupies residues 462 to 489; that stretch reads ISQFFPTLLLWSFSALLPSIVYYSTLLE. Residues 490 to 494 lie on the Cytoplasmic side of the membrane; the sequence is SHWTR. The chain crosses the membrane as a helical span at residues 495–531; that stretch reads SGENRIMVSKVYIFLIFMVLILPSLGLTSLDFFFRWL. Residues 532–553 are Extracellular-facing; the sequence is FDKTSSETSIRLECVFLPDQGA. The helical transmembrane segment at 554 to 585 threads the bilayer; it reads FFVNYVIASAFIGSGMELLRLPGLILYTFRMI. The tract at residues 554 to 585 is gating helix; that stretch reads FFVNYVIASAFIGSGMELLRLPGLILYTFRMI. Residues 586–605 lie on the Cytoplasmic side of the membrane; it reads MAKTAADRRNVKQNQAFEYE. The helical transmembrane segment at 606-623 threads the bilayer; the sequence is FGAMYAWMLCVFTVIMAY. Topologically, residues 624–627 are extracellular; it reads SITC. Residues 628 to 650 traverse the membrane as a helical segment; that stretch reads PIIVPFGLIYILLKHMVDRHNLY. At 651-660 the chain is on the cytoplasmic side; it reads FAYLPAKLEK. A helical transmembrane segment spans residues 661–688; that stretch reads RIHFAAVNQALAAPILCLFWLFFFSFLR. Over 689 to 693 the chain is Extracellular; that stretch reads LGLTA. Residues 694-708 traverse the membrane as a helical segment; it reads PATLFTFLVVLLTIL. Over 709-804 the chain is Cytoplasmic; it reads ACLLYTCFGC…GTAAYAYQES (96 aa). Serine 738 is modified (phosphoserine).

This sequence belongs to the CSC1 (TC 1.A.17) family. Monomer. N-Glycosylated.

Its subcellular location is the lysosome membrane. The protein localises to the early endosome membrane. The protein resides in the cell membrane. It carries out the reaction Ca(2+)(in) = Ca(2+)(out). Its function is as follows. Mechanosensitive cation channel with low conductance and high activation threshold. In contrast to TMEM63B, does not show phospholipid scramblase activity. Acts as a regulator of lysosomal morphology by mediating lysosomal mechanosensitivity. Important for the baby's first breath and respiration throughout life. Upon lung inflation conducts cation currents in alveolar type 1 and 2 cells triggering lamellar body exocytosis and surfactant secretion into airspace. Also acts as an osmosensitive cation channel preferentially activated by hypotonic stress. The sequence is that of Mechanosensitive cation channel TMEM63A from Mus musculus (Mouse).